Consider the following 469-residue polypeptide: Probable Xaa-Pro aminopeptidase PEPP (469 aa).

Residues aspartate 265, aspartate 276, glutamate 399, and glutamate 439 each contribute to the Mn(2+) site.

It belongs to the peptidase M24B family. The cofactor is Mn(2+).

The enzyme catalyses Release of any N-terminal amino acid, including proline, that is linked to proline, even from a dipeptide or tripeptide.. Catalyzes the removal of a penultimate prolyl residue from the N-termini of peptides. This is Probable Xaa-Pro aminopeptidase PEPP (PEPP) from Coccidioides posadasii (strain RMSCC 757 / Silveira) (Valley fever fungus).